Reading from the N-terminus, the 121-residue chain is MIQQETFLTVADNSGAKRLQCIRVLGSNRRYAHVGDVIVASVKDAMPNMGVKKSDVVKAVVVRTRATMRRETGNSIRFDDNAAVLINDDQNPRGTRVFGPVARELRERNFTKIVSLAPEVI.

This sequence belongs to the universal ribosomal protein uL14 family. Part of the 50S ribosomal subunit. Forms a cluster with proteins L3 and L19. In the 70S ribosome, L14 and L19 interact and together make contacts with the 16S rRNA in bridges B5 and B8.

In terms of biological role, binds to 23S rRNA. Forms part of two intersubunit bridges in the 70S ribosome. This chain is Large ribosomal subunit protein uL14, found in Prochlorococcus marinus (strain NATL1A).